Reading from the N-terminus, the 427-residue chain is Gustatory receptor for sugar taste 43a (427 aa).

Residues 1 to 37 (MEISQPSIGIFYISKVLALAPYATVRNSKGRVEIGRS) lie on the Cytoplasmic side of the membrane. The helical transmembrane segment at 38 to 63 (WLFTVYSATLTVVMVFLTYRGLLFDA) threads the bilayer. At 64–75 (NSEIPVRMKSAT) the chain is on the extracellular side. The beta-D-fructose site is built by arginine 70 and aspartate 83. The chain crosses the membrane as a helical span at residues 76–96 (SKVVTALDVSVVVMAIVSGVY). At 97-135 (CGLFSLNDTLELNDRLNKIDNTLNAYNNFRRDRWRALGM) the chain is on the cytoplasmic side. Residues 136–158 (AAVSLLAISILVGLDVGTWMRIA) form a helical membrane-spanning segment. The Extracellular segment spans residues 159 to 168 (QDMNIAQSDT). Residues 169–193 (ELNVHWYIPFYSLYFILTGLQVNIA) form a helical membrane-spanning segment. Tyrosine 182 contributes to the beta-D-fructose binding site. Over 194-293 (NTAYGLGRRF…CVHLLSNSFG (100 aa)) the chain is Cytoplasmic. The chain crosses the membrane as a helical span at residues 294 to 316 (IAVLFILVSCLLHLVATAYFLFL). Residue threonine 310 participates in beta-D-fructose binding. At 317–324 (ELLSKRDN) the chain is on the extracellular side. The chain crosses the membrane as a helical span at residues 325–346 (GYLWVQMLWICFHFLRLLMVVE). Histidine 337 contributes to the beta-D-fructose binding site. Residues 347-402 (PCHLAARESRKTIQIVCEIERKVHEPILAEAVKKFWQQLLVVDADFSACGLCRVNR) lie on the Cytoplasmic side of the membrane. The helical transmembrane segment at 403-423 (TILTSFASAIATYLVILIQFQ) threads the bilayer. Residue glutamine 421 participates in Ca(2+) binding. The Extracellular portion of the chain corresponds to 424 to 427 (RTNG).

It belongs to the insect chemoreceptor superfamily. Gustatory receptor (GR) family. Gr21a subfamily. In terms of assembly, homotetramer. As to expression, expressed in the adult labellar chemosensory neurons and in the adult head, abdomen, leg and wing. In larvae, is expressed in taste organs, as well as the brain and the gastrointestinal system.

It localises to the cell membrane. Functionally, gustatory receptor which mediates acceptance or avoidance behavior, depending on its substrates. Gr43a is the main sugar receptor in larvae. Functions as a narrowly tuned fructose receptor in taste neurons but also as a fructose receptor in the brain. Necessary and sufficient to sense hemolymph fructose and promote feeding in hungry flies but suppress feeding in satiated flies. In Drosophila melanogaster (Fruit fly), this protein is Gustatory receptor for sugar taste 43a (Gr43a).